The chain runs to 762 residues: Phospholipase D alpha 4 (762 aa).

One can recognise a C2 domain in the interval 1 to 116; sequence MELEEQKKYF…VINGFFPLIA (116 aa). A Ca(2+)-binding site is contributed by Asp-172. The PLD phosphodiesterase 1 domain occupies 301–339; sequence TAFAHHQKTITLDTRVTNSSTKEREIMSFLGGFDLCDGR. Residues His-306, Lys-308, and Asp-313 contribute to the active site. Residue His-306 participates in a 1,2-diacyl-sn-glycero-3-phosphate binding. Residues His-345 and His-377 each contribute to the Ca(2+) site. A 1,2-diacyl-sn-glycero-3-phosphate-binding residues include Gln-477 and His-615. In terms of domain architecture, PLD phosphodiesterase 2 spans 610 to 637; sequence FMVYVHSKLMIVDDTYILIGSANINQRS. Residues His-615, Lys-617, and Asp-622 contribute to the active site. Glu-671 contacts Ca(2+).

This sequence belongs to the phospholipase D family. C2-PLD subfamily. The cofactor is Ca(2+). In terms of tissue distribution, expressed in roots, leaves, stems, siliques,flowers and inflorescences.

It localises to the cell membrane. It carries out the reaction a 1,2-diacyl-sn-glycero-3-phosphocholine + H2O = a 1,2-diacyl-sn-glycero-3-phosphate + choline + H(+). Its function is as follows. Hydrolyzes glycerol-phospholipids at the terminal phosphodiesteric bond to generate phosphatidic acids (PA). Promotes growth and plays a role in nitrogen signaling. This Arabidopsis thaliana (Mouse-ear cress) protein is Phospholipase D alpha 4.